The sequence spans 165 residues: Cyclic pyranopterin monophosphate synthase (165 aa).

Substrate-binding positions include 83 to 85 (FCH) and 120 to 121 (ME). Aspartate 135 is an active-site residue.

This sequence belongs to the MoaC family. Homohexamer; trimer of dimers.

It carries out the reaction (8S)-3',8-cyclo-7,8-dihydroguanosine 5'-triphosphate = cyclic pyranopterin phosphate + diphosphate. It participates in cofactor biosynthesis; molybdopterin biosynthesis. Functionally, catalyzes the conversion of (8S)-3',8-cyclo-7,8-dihydroguanosine 5'-triphosphate to cyclic pyranopterin monophosphate (cPMP). This is Cyclic pyranopterin monophosphate synthase from Xanthomonas campestris pv. campestris (strain B100).